The sequence spans 474 residues: tRNA-2-methylthio-N(6)-dimethylallyladenosine synthase (474 aa).

An MTTase N-terminal domain is found at 3–120; the sequence is KKLLIKTWGC…LPEMIKQSQS (118 aa). Cysteine 12, cysteine 49, cysteine 83, cysteine 157, cysteine 161, and cysteine 164 together coordinate [4Fe-4S] cluster. The Radical SAM core domain maps to 143 to 375; that stretch reads RAEGATAFVS…QQQINAQAMR (233 aa). In terms of domain architecture, TRAM spans 378–441; the sequence is RLMLGTEQRV…ANSLRGEIVR (64 aa).

Belongs to the methylthiotransferase family. MiaB subfamily. Monomer. [4Fe-4S] cluster is required as a cofactor.

It localises to the cytoplasm. The enzyme catalyses N(6)-dimethylallyladenosine(37) in tRNA + (sulfur carrier)-SH + AH2 + 2 S-adenosyl-L-methionine = 2-methylsulfanyl-N(6)-dimethylallyladenosine(37) in tRNA + (sulfur carrier)-H + 5'-deoxyadenosine + L-methionine + A + S-adenosyl-L-homocysteine + 2 H(+). Catalyzes the methylthiolation of N6-(dimethylallyl)adenosine (i(6)A), leading to the formation of 2-methylthio-N6-(dimethylallyl)adenosine (ms(2)i(6)A) at position 37 in tRNAs that read codons beginning with uridine. The polypeptide is tRNA-2-methylthio-N(6)-dimethylallyladenosine synthase (Vibrio vulnificus (strain CMCP6)).